Consider the following 73-residue polypeptide: UPF0154 protein BcerKBAB4_3367 (73 aa).

Residues 4–24 form a helical membrane-spanning segment; the sequence is WLGILVGVVALVAGVALGFFI.

The protein belongs to the UPF0154 family.

It is found in the cell membrane. The protein is UPF0154 protein BcerKBAB4_3367 of Bacillus mycoides (strain KBAB4) (Bacillus weihenstephanensis).